Consider the following 462-residue polypeptide: Argininosuccinate lyase (462 aa).

It belongs to the lyase 1 family. Argininosuccinate lyase subfamily.

Its subcellular location is the cytoplasm. It carries out the reaction 2-(N(omega)-L-arginino)succinate = fumarate + L-arginine. It functions in the pathway amino-acid biosynthesis; L-arginine biosynthesis; L-arginine from L-ornithine and carbamoyl phosphate: step 3/3. This is Argininosuccinate lyase from Pelagibacter ubique (strain HTCC1062).